Reading from the N-terminus, the 113-residue chain is Large ribosomal subunit protein bL19 (113 aa).

The protein belongs to the bacterial ribosomal protein bL19 family.

This protein is located at the 30S-50S ribosomal subunit interface and may play a role in the structure and function of the aminoacyl-tRNA binding site. This chain is Large ribosomal subunit protein bL19, found in Mycobacteroides abscessus (strain ATCC 19977 / DSM 44196 / CCUG 20993 / CIP 104536 / JCM 13569 / NCTC 13031 / TMC 1543 / L948) (Mycobacterium abscessus).